Reading from the N-terminus, the 235-residue chain is MDIKVKDFEGPLDLLLHLVSKYEVDVYQVPIVDVIEQYLAYIETLQAMRLELAGEYMLMASQLMLIKSRRLLPKLVDKEPDEEDLEQELLGKIEEYSRFKALSQELASQHDKRALLFSKPKQELIFEQAVLQKDKTVMDLFLAFSQLMAAKQEAFKYNHTVIERDDYRIEDMMELIEARLELEQELTLTDLLKHCDHLNEAITLFLASLELIKRQLVGIEQTSHFGQIVLRKEIQ.

The protein belongs to the ScpA family. As to quaternary structure, component of a cohesin-like complex composed of ScpA, ScpB and the Smc homodimer, in which ScpA and ScpB bind to the head domain of Smc. The presence of the three proteins is required for the association of the complex with DNA.

It localises to the cytoplasm. Its function is as follows. Participates in chromosomal partition during cell division. May act via the formation of a condensin-like complex containing Smc and ScpB that pull DNA away from mid-cell into both cell halves. This Streptococcus equi subsp. zooepidemicus (strain MGCS10565) protein is Segregation and condensation protein A.